Here is a 243-residue protein sequence, read N- to C-terminus: MIVIPAIDLKDGACVRLRQGLMEDSTVFSDDPAAMARKWVEQGAKRLHLVDLNGAFAGEPVNGEVVKAIAKAYPNLPIQIGGGIRSLETIKHYLDAGVTYVIIGTKAVKEPEFVKQACDAFPGHIIVGLDAKDGYVATDGWAEVSTVKATDLAKQFAADGVSEIVYTDIARDGMMQGVNIEATVEMARAGNIPIIASGGITNMDDIKGLMAVAHEGITGAITGRAIYEGSLDLAEAQAYCDAQ.

Asp-8 functions as the Proton acceptor in the catalytic mechanism. The active-site Proton donor is the Asp-130.

The protein belongs to the HisA/HisF family.

It localises to the cytoplasm. It carries out the reaction 1-(5-phospho-beta-D-ribosyl)-5-[(5-phospho-beta-D-ribosylamino)methylideneamino]imidazole-4-carboxamide = 5-[(5-phospho-1-deoxy-D-ribulos-1-ylimino)methylamino]-1-(5-phospho-beta-D-ribosyl)imidazole-4-carboxamide. It participates in amino-acid biosynthesis; L-histidine biosynthesis; L-histidine from 5-phospho-alpha-D-ribose 1-diphosphate: step 4/9. This chain is 1-(5-phosphoribosyl)-5-[(5-phosphoribosylamino)methylideneamino] imidazole-4-carboxamide isomerase, found in Saccharophagus degradans (strain 2-40 / ATCC 43961 / DSM 17024).